A 231-amino-acid chain; its full sequence is 5'-methylthioadenosine/S-adenosylhomocysteine nucleosidase (231 aa).

The active-site Proton acceptor is Glu-12. Substrate is bound by residues Gly-78, Met-153, and 174 to 175; that span reads ME. The active-site Proton donor is Asp-198.

It belongs to the PNP/UDP phosphorylase family. MtnN subfamily.

The catalysed reaction is S-adenosyl-L-homocysteine + H2O = S-(5-deoxy-D-ribos-5-yl)-L-homocysteine + adenine. It carries out the reaction S-methyl-5'-thioadenosine + H2O = 5-(methylsulfanyl)-D-ribose + adenine. The enzyme catalyses 5'-deoxyadenosine + H2O = 5-deoxy-D-ribose + adenine. The protein operates within amino-acid biosynthesis; L-methionine biosynthesis via salvage pathway; S-methyl-5-thio-alpha-D-ribose 1-phosphate from S-methyl-5'-thioadenosine (hydrolase route): step 1/2. In terms of biological role, catalyzes the irreversible cleavage of the glycosidic bond in both 5'-methylthioadenosine (MTA) and S-adenosylhomocysteine (SAH/AdoHcy) to adenine and the corresponding thioribose, 5'-methylthioribose and S-ribosylhomocysteine, respectively. Also cleaves 5'-deoxyadenosine, a toxic by-product of radical S-adenosylmethionine (SAM) enzymes, into 5-deoxyribose and adenine. The chain is 5'-methylthioadenosine/S-adenosylhomocysteine nucleosidase from Bacillus thuringiensis subsp. konkukian (strain 97-27).